The chain runs to 98 residues: Integration host factor subunit alpha (98 aa).

The protein belongs to the bacterial histone-like protein family. As to quaternary structure, heterodimer of an alpha and a beta chain.

Functionally, this protein is one of the two subunits of integration host factor, a specific DNA-binding protein that functions in genetic recombination as well as in transcriptional and translational control. This is Integration host factor subunit alpha from Mannheimia succiniciproducens (strain KCTC 0769BP / MBEL55E).